A 140-amino-acid chain; its full sequence is Small ribosomal subunit protein uS19 (140 aa).

The protein belongs to the universal ribosomal protein uS19 family.

Protein S19 forms a complex with S13 that binds strongly to the 16S ribosomal RNA. The chain is Small ribosomal subunit protein uS19 (rps19) from Saccharolobus solfataricus (strain ATCC 35092 / DSM 1617 / JCM 11322 / P2) (Sulfolobus solfataricus).